We begin with the raw amino-acid sequence, 432 residues long: Probable exopolygalacturonase C (432 aa).

The N-terminal stretch at 1 to 20 (MPISKGIFLSLLSTLPLALA) is a signal peptide. Residues Asn-33, Asn-73, Asn-90, and Asn-140 are each glycosylated (N-linked (GlcNAc...) asparagine). PbH1 repeat units lie at residues 206–227 (GTNI…AVGS) and 229–250 (SHDI…SIGS). The active-site Proton donor is the Asp-220. His-244 is a catalytic residue. The N-linked (GlcNAc...) asparagine glycan is linked to Asn-260. One copy of the PbH1 3 repeat lies at 261–282 (ITNLRFEDVTVIDALYAARFKS). N-linked (GlcNAc...) asparagine glycans are attached at residues Asn-292 and Asn-302. Cys-377 and Cys-383 form a disulfide bridge. The N-linked (GlcNAc...) asparagine glycan is linked to Asn-407.

The protein belongs to the glycosyl hydrolase 28 family.

The protein resides in the secreted. The catalysed reaction is [(1-&gt;4)-alpha-D-galacturonosyl](n) + H2O = alpha-D-galacturonate + [(1-&gt;4)-alpha-D-galacturonosyl](n-1). Its function is as follows. Specific in hydrolyzing the terminal glycosidic bond of polygalacturonic acid and oligogalacturonates. The polypeptide is Probable exopolygalacturonase C (pgxC) (Aspergillus terreus (strain NIH 2624 / FGSC A1156)).